Consider the following 173-residue polypeptide: MTNLILIFAAQILLFYAVASVGDELGRTMNGKHLGPYKKEKLTHLRVYWHNSVNGRNPSSVMIQQPVLNSSLSGSITMMDDPLTFDVPRNATVVGQAQGMYVAAAQGEIGFLMVMNFAFTTGKYNGSTITILGRNVVMSKVREMPVVGGSGIFRFARGYVEARTKSFDLKAGC.

The N-terminal stretch at 1 to 22 (MTNLILIFAAQILLFYAVASVG) is a signal peptide. N69, N90, and N125 each carry an N-linked (GlcNAc...) asparagine glycan.

It belongs to the plant dirigent protein family. In terms of assembly, homodimer.

The protein localises to the secreted. Its subcellular location is the extracellular space. It localises to the apoplast. Functionally, dirigent proteins impart stereoselectivity on the phenoxy radical-coupling reaction, yielding optically active lignans from two molecules of coniferyl alcohol in the biosynthesis of lignans, flavonolignans, and alkaloids and thus plays a central role in plant secondary metabolism. The chain is Dirigent protein 8 (DIR8) from Arabidopsis thaliana (Mouse-ear cress).